Reading from the N-terminus, the 376-residue chain is Queuine tRNA-ribosyltransferase (376 aa).

Residue aspartate 93 is the Proton acceptor of the active site. Residues 93–97 (DSGGF), aspartate 147, glutamine 190, and glycine 217 contribute to the substrate site. Residues 248–254 (GVGKPDD) are RNA binding. The Nucleophile role is filled by aspartate 267. 4 residues coordinate Zn(2+): cysteine 305, cysteine 307, cysteine 310, and histidine 336.

The protein belongs to the queuine tRNA-ribosyltransferase family. Homodimer. Within each dimer, one monomer is responsible for RNA recognition and catalysis, while the other monomer binds to the replacement base PreQ1. Zn(2+) is required as a cofactor.

It catalyses the reaction 7-aminomethyl-7-carbaguanine + guanosine(34) in tRNA = 7-aminomethyl-7-carbaguanosine(34) in tRNA + guanine. The protein operates within tRNA modification; tRNA-queuosine biosynthesis. Catalyzes the base-exchange of a guanine (G) residue with the queuine precursor 7-aminomethyl-7-deazaguanine (PreQ1) at position 34 (anticodon wobble position) in tRNAs with GU(N) anticodons (tRNA-Asp, -Asn, -His and -Tyr). Catalysis occurs through a double-displacement mechanism. The nucleophile active site attacks the C1' of nucleotide 34 to detach the guanine base from the RNA, forming a covalent enzyme-RNA intermediate. The proton acceptor active site deprotonates the incoming PreQ1, allowing a nucleophilic attack on the C1' of the ribose to form the product. After dissociation, two additional enzymatic reactions on the tRNA convert PreQ1 to queuine (Q), resulting in the hypermodified nucleoside queuosine (7-(((4,5-cis-dihydroxy-2-cyclopenten-1-yl)amino)methyl)-7-deazaguanosine). This is Queuine tRNA-ribosyltransferase from Ruegeria sp. (strain TM1040) (Silicibacter sp.).